Consider the following 156-residue polypeptide: Small ribosomal subunit protein uS7 (156 aa).

This sequence belongs to the universal ribosomal protein uS7 family. Part of the 30S ribosomal subunit. Contacts proteins S9 and S11.

One of the primary rRNA binding proteins, it binds directly to 16S rRNA where it nucleates assembly of the head domain of the 30S subunit. Is located at the subunit interface close to the decoding center, probably blocks exit of the E-site tRNA. The polypeptide is Small ribosomal subunit protein uS7 (Laribacter hongkongensis (strain HLHK9)).